A 484-amino-acid chain; its full sequence is Ferrochelatase-2, chloroplastic (484 aa).

Belongs to the ferrochelatase family.

It is found in the plastid. It localises to the chloroplast. It carries out the reaction heme b + 2 H(+) = protoporphyrin IX + Fe(2+). Its pathway is porphyrin-containing compound metabolism; protoheme biosynthesis; protoheme from protoporphyrin-IX: step 1/1. Catalyzes the ferrous insertion into protoporphyrin IX. The sequence is that of Ferrochelatase-2, chloroplastic (HEMH) from Hordeum vulgare (Barley).